Reading from the N-terminus, the 175-residue chain is Gamma-crystallin B (175 aa).

Beta/gamma crystallin 'Greek key' domains lie at 2-40 (GKIT…RVDS) and 41-83 (GCWM…CLIP). The tract at residues 84-88 (QHSGT) is connecting peptide. Beta/gamma crystallin 'Greek key' domains follow at residues 89–129 (YRMR…NVME) and 130–172 (GCWV…RRVM).

This sequence belongs to the beta/gamma-crystallin family.

In terms of biological role, crystallins are the dominant structural components of the vertebrate eye lens. The sequence is that of Gamma-crystallin B (Crygb) from Mus musculus (Mouse).